The chain runs to 215 residues: Histidine biosynthesis bifunctional protein HisIE (215 aa).

The tract at residues 1–118 (MTKSISIEHL…YKNDVALLQI (118 aa)) is phosphoribosyl-AMP cyclohydrolase. The interval 119–215 (IPQVSAKIKE…HVEKEGQQRE (97 aa)) is phosphoribosyl-ATP pyrophosphohydrolase.

The protein in the N-terminal section; belongs to the PRA-CH family. It in the C-terminal section; belongs to the PRA-PH family.

Its subcellular location is the cytoplasm. The catalysed reaction is 1-(5-phospho-beta-D-ribosyl)-ATP + H2O = 1-(5-phospho-beta-D-ribosyl)-5'-AMP + diphosphate + H(+). The enzyme catalyses 1-(5-phospho-beta-D-ribosyl)-5'-AMP + H2O = 1-(5-phospho-beta-D-ribosyl)-5-[(5-phospho-beta-D-ribosylamino)methylideneamino]imidazole-4-carboxamide. The protein operates within amino-acid biosynthesis; L-histidine biosynthesis; L-histidine from 5-phospho-alpha-D-ribose 1-diphosphate: step 2/9. Its pathway is amino-acid biosynthesis; L-histidine biosynthesis; L-histidine from 5-phospho-alpha-D-ribose 1-diphosphate: step 3/9. This chain is Histidine biosynthesis bifunctional protein HisIE, found in Oceanobacillus iheyensis (strain DSM 14371 / CIP 107618 / JCM 11309 / KCTC 3954 / HTE831).